Here is a 491-residue protein sequence, read N- to C-terminus: Protein DETOXIFICATION 56 (491 aa).

12 helical membrane passes run 39 to 59, 72 to 92, 111 to 131, 154 to 174, 181 to 201, 212 to 232, 261 to 281, 291 to 311, 336 to 356, 379 to 399, 409 to 429, and 438 to 458; these read LPLV…SVFL, LGFS…SAAM, TLFM…FLWL, LLYL…KAYL, LPIM…NIVL, MAVW…VIVV, GPCC…VLLT, VSIL…MLSL, YTTL…MIAF, MLIM…GEIV, MYAN…TLAF, and FLIG…IFIA.

Belongs to the multi antimicrobial extrusion (MATE) (TC 2.A.66.1) family. In terms of assembly, interacts with BCA4 and HT1. As to expression, preferentially expressed in guard cells.

The protein resides in the cell membrane. In terms of biological role, could function as a HCO(3)(-) -sensing component in the CO(2) signaling pathway in guard cells. Acts as an upstream repressor of HT1. Plays a role in stomatal response to CO(2). The sequence is that of Protein DETOXIFICATION 56 from Arabidopsis thaliana (Mouse-ear cress).